Here is a 257-residue protein sequence, read N- to C-terminus: Imidazole glycerol phosphate synthase subunit HisF (257 aa).

Residues D11 and D130 contribute to the active site.

It belongs to the HisA/HisF family. As to quaternary structure, heterodimer of HisH and HisF.

It is found in the cytoplasm. It carries out the reaction 5-[(5-phospho-1-deoxy-D-ribulos-1-ylimino)methylamino]-1-(5-phospho-beta-D-ribosyl)imidazole-4-carboxamide + L-glutamine = D-erythro-1-(imidazol-4-yl)glycerol 3-phosphate + 5-amino-1-(5-phospho-beta-D-ribosyl)imidazole-4-carboxamide + L-glutamate + H(+). It participates in amino-acid biosynthesis; L-histidine biosynthesis; L-histidine from 5-phospho-alpha-D-ribose 1-diphosphate: step 5/9. Functionally, IGPS catalyzes the conversion of PRFAR and glutamine to IGP, AICAR and glutamate. The HisF subunit catalyzes the cyclization activity that produces IGP and AICAR from PRFAR using the ammonia provided by the HisH subunit. The polypeptide is Imidazole glycerol phosphate synthase subunit HisF (Psychromonas ingrahamii (strain DSM 17664 / CCUG 51855 / 37)).